Reading from the N-terminus, the 339-residue chain is Anthranilate phosphoribosyltransferase (339 aa).

Residues G81, 84-85 (GD), S89, 91-94 (NVSS), 109-117 (KHGNRALSS), and A121 contribute to the 5-phospho-alpha-D-ribose 1-diphosphate site. G81 serves as a coordination point for anthranilate. Position 93 (S93) interacts with Mg(2+). N112 provides a ligand contact to anthranilate. R167 is a binding site for anthranilate. Mg(2+) contacts are provided by D225 and E226.

Belongs to the anthranilate phosphoribosyltransferase family. In terms of assembly, homodimer. The cofactor is Mg(2+).

It carries out the reaction N-(5-phospho-beta-D-ribosyl)anthranilate + diphosphate = 5-phospho-alpha-D-ribose 1-diphosphate + anthranilate. It participates in amino-acid biosynthesis; L-tryptophan biosynthesis; L-tryptophan from chorismate: step 2/5. Functionally, catalyzes the transfer of the phosphoribosyl group of 5-phosphorylribose-1-pyrophosphate (PRPP) to anthranilate to yield N-(5'-phosphoribosyl)-anthranilate (PRA). This is Anthranilate phosphoribosyltransferase from Brucella suis biovar 1 (strain 1330).